The sequence spans 862 residues: Dipeptidyl peptidase 9 (862 aa).

Catalysis depends on charge relay system residues S729, D807, and H839. S729 contributes to the Val-boroPro binding site.

Belongs to the peptidase S9B family. DPPIV subfamily. As to quaternary structure, homodimer. Forms a ternary complex with NLRP1, composed of a DPP9 homodimer, one full-length NLRP1 protein, and one cleaved C-terminus of NLRP1 (NACHT, LRR and PYD domains-containing protein 1, C-terminus). Forms a ternary complex with CARD8, composed of a DPP9 homodimer, one full-length NLRP1 protein, and one cleaved C-terminus of CARD8 (Caspase recruitment domain-containing protein 8, C-terminus). In the ternary complex, only one subunit of the DPP9 homodimer is bound to NLRP1 or CARD8. As to expression, detected in kidney, skin, brain, thymus and liver (at protein level).

It localises to the cytoplasm. Its subcellular location is the cytosol. It carries out the reaction Release of an N-terminal dipeptide, Xaa-Yaa-|-Zaa-, from a polypeptide, preferentially when Yaa is Pro, provided Zaa is neither Pro nor hydroxyproline.. Its activity is regulated as follows. Inhibited by the serine proteinase inhibitor 4-(2-aminoethyl)benzenesulphonyl fluoride (AEBSF), and by di-isopropylfluorophosphate. Inhibited by Val-boroPro (Talabostat, PT-100), a non-selective inhibitor, which triggers pyroptosis in monocytes and macrophages. Val-boroPro inhibits activity by binding to the active site, mimicking a substrate-bound state, thereby displacing the C-terminal fragment of NLRP1, leading to activation of the NLRP1 inflammasome. In contrast, Val-boroPro does not directly displaces CARD8: it acts by promoting degradation of the N-terminal part of CARD8, leading to indirect disruption of the ternary complex. Dipeptidyl peptidase that cleaves off N-terminal dipeptides from proteins having a Pro or Ala residue at position 2. Acts as a key inhibitor of caspase-1-dependent monocyte and macrophage pyroptosis in resting cells by preventing activation of NLRP1 and CARD8. Sequesters the cleaved C-terminal part of NLRP1 and CARD8, which respectively constitute the active part of the NLRP1 and CARD8 inflammasomes, in a ternary complex, thereby preventing their oligomerization and activation. The dipeptidyl peptidase activity is required to suppress NLRP1 and CARD8; however, neither NLRP1 nor CARD8 are bona fide substrates of DPP9, suggesting the existence of substrate(s) required for NLRP1 and CARD8 inhibition. The sequence is that of Dipeptidyl peptidase 9 from Mus musculus (Mouse).